We begin with the raw amino-acid sequence, 457 residues long: Heme sensor protein HssS (457 aa).

A run of 2 helical transmembrane segments spans residues 9–29 (IAIYSITVILFSALISFVLTN) and 164–184 (TFLAVLLMLLLFISISLVIAS). In terms of domain architecture, HAMP spans 186–238 (YSIIRPVKKLKLATERLIDGDFETPIKQTRKDEIGTLQYHFNKMRESLGQVDQ). The 211-residue stretch at 246-456 (NVSHEIKTPL…TFTITLPNNS (211 aa)) folds into the Histidine kinase domain. His249 is modified (phosphohistidine; by autocatalysis).

Autophosphorylated.

The protein resides in the cell membrane. It catalyses the reaction ATP + protein L-histidine = ADP + protein N-phospho-L-histidine.. In terms of biological role, member of the two-component regulatory system HssS/HssR involved in intracellular heme homeostasis and tempering of staphylococcal virulence. HssS functions as a heme sensor histidine kinase which is autophosphorylated at a histidine residue and transfers its phosphate group to an aspartate residue of HssR. HssR/HssS activates the expression of hrtAB, an efflux pump, in response to extracellular heme, hemin, hemoglobin or blood. The sequence is that of Heme sensor protein HssS (hssS) from Staphylococcus aureus (strain Mu3 / ATCC 700698).